The chain runs to 687 residues: Immune inhibitor A (687 aa).

Residues Met1 to Leu12 are compositionally biased toward basic and acidic residues. Residues Met1 to Pro25 constitute a signal peptide (or 32). The interval Met1–Ala43 is disordered. Positions Val26 to Lys40 are excised as a propeptide. His266 is a binding site for Zn(2+). Residue Glu267 is part of the active site. His270 lines the Zn(2+) pocket.

The protein belongs to the peptidase M6 family. Zn(2+) is required as a cofactor. It depends on Ca(2+) as a cofactor.

Its subcellular location is the secreted. In terms of biological role, neutral metalloprotease that is secreted to degrade antibacterial proteins produced by the insect host for its defense (attacins and cecropins). Probably degrades some unknown crucial protein(s) too, since it is toxic when injected to insect larvae. This Bacillus thuringiensis subsp. alesti protein is Immune inhibitor A (ina).